We begin with the raw amino-acid sequence, 312 residues long: Acetyl-coenzyme A carboxylase carboxyl transferase subunit alpha (312 aa).

The region spanning 36–286 (RLDKEVKSIY…KEYFLDALRT (251 aa)) is the CoA carboxyltransferase C-terminal domain.

It belongs to the AccA family. As to quaternary structure, acetyl-CoA carboxylase is a heterohexamer composed of biotin carboxyl carrier protein (AccB), biotin carboxylase (AccC) and two subunits each of ACCase subunit alpha (AccA) and ACCase subunit beta (AccD).

The protein localises to the cytoplasm. It carries out the reaction N(6)-carboxybiotinyl-L-lysyl-[protein] + acetyl-CoA = N(6)-biotinyl-L-lysyl-[protein] + malonyl-CoA. It functions in the pathway lipid metabolism; malonyl-CoA biosynthesis; malonyl-CoA from acetyl-CoA: step 1/1. Functionally, component of the acetyl coenzyme A carboxylase (ACC) complex. First, biotin carboxylase catalyzes the carboxylation of biotin on its carrier protein (BCCP) and then the CO(2) group is transferred by the carboxyltransferase to acetyl-CoA to form malonyl-CoA. This chain is Acetyl-coenzyme A carboxylase carboxyl transferase subunit alpha, found in Helicobacter pylori (strain J99 / ATCC 700824) (Campylobacter pylori J99).